We begin with the raw amino-acid sequence, 496 residues long: MARGRAQTDSAASKQTKTVNSKKRPNEETPQPSTKKLKAKQQHKSKQKEETYIQASVKWTGGQKKVGQTSILHYIYKSSLGQSIHAQLRQCLQEPFIRSLKSYKLHRTASPFDRRVTSLEWHPTHPTTVAVGSKGGDIILWDYDVLNKTSFIQGMGPGDAITGMKFNQFNTNQLFVSSIWGATTLRDFSGSVIQVFAKTDSWDYWYCCVDVSVSRQMLATGDSTGRLLLLGLDGHEIFKEKLHKAKVTHAEFNPRCDWLMATSSVDATVKLWDLRNIKDKNSYIAEMPHEKPVNAAYFNPTDSTKLLTTDQRNEIRVYSSYDWSKPDQIIIHPHRQFQHLTPIKATWHPMYDLIVAGRYPDDQLLLNDKRTIDIYDANSGGLVHQLRDPNAAGIISLNKFSPTGDVLASGMGFNILIWNREDTLSSVNRKQTIVTGEDVGGRAGGSRSQRSSQQRPSRDRRAAADEAKLKKKLSATETKSKTKSKTESKTSKSKKK.

Residues Met-1–Thr-51 form a disordered region. The span at Gln-7–Val-19 shows a compositional bias: polar residues. Positions Lys-35–Lys-46 are enriched in basic residues. WD repeat units follow at residues Ser-118–Gln-153, Ile-161–Phe-196, Trp-205–Glu-240, Lys-246–His-289, and Pro-292–His-332. The DWD box motif lies at Trp-258 to Asn-276. The photolesion recognition stretch occupies residues Phe-337 to His-339. 2 WD repeats span residues Thr-346–Leu-386 and Ser-396–Arg-420. The disordered stretch occupies residues Thr-435–Lys-496. Positions Gly-445 to Arg-455 are enriched in low complexity. Composition is skewed to basic and acidic residues over residues Pro-456–Lys-468 and Thr-478–Thr-490.

Belongs to the WD repeat DDB2/WDR76 family. As to quaternary structure, component of the UV-DDB complex which includes ddb1 and ddb2. Component of a DCX (DDB1-CUL4-X-box) E3 ubiquitin-protein ligase complex that includes cul4a, or cul4b, ddb1, ddb2 and rbx1. A large number of other DCX complexes may also exist in which an alternate substrate targeting subunit replaces ddb2. These targeting subunits are generally known as DCAF (ddb1- and cul4-associated factor) or CDW (cul4-ddb1-associated WD40-repeat) proteins.

It localises to the nucleus. It is found in the chromosome. The protein operates within protein modification; protein ubiquitination. Protein, which is both involved in DNA repair and protein ubiquitination, as part of the UV-DDB complex and DCX (DDB1-CUL4-X-box) complexes, respectively. Core component of the UV-DDB complex (UV-damaged DNA-binding protein complex), a complex that recognizes UV-induced DNA damage and recruit proteins of the nucleotide excision repair pathway (the NER pathway) to initiate DNA repair. The UV-DDB complex preferentially binds to cyclobutane pyrimidine dimers (CPD), 6-4 photoproducts (6-4 PP), apurinic sites and short mismatches. Also functions as the substrate recognition module for the DCX (DDB2-CUL4-X-box) E3 ubiquitin-protein ligase complex DDB2-CUL4-ROC1 (also known as CUL4-DDB-ROC1 and CUL4-DDB-RBX1). The DDB2-CUL4-ROC1 complex may ubiquitinate histone H2A, histone H3 and histone H4 at sites of UV-induced DNA damage. The ubiquitination of histones may facilitate their removal from the nucleosome and promote subsequent DNA repair. This is DNA damage-binding protein 2 (ddb2) from Danio rerio (Zebrafish).